We begin with the raw amino-acid sequence, 78 residues long: Pigment-dispersing hormone 2 peptides (78 aa).

The N-terminal stretch at 1–21 is a signal peptide; that stretch reads MRSGVFVAVLVVVVFALLTQG. The residue at position 75 (alanine 75) is an Alanine amide.

It belongs to the arthropod PDH family. As to expression, eyestalk sinus gland.

It localises to the secreted. The pigment-dispersing hormone causes the migration of the distal retinal pigment into the proximal end of the pigment chromatophore cells and thus decreases the amount of light entering the retinulas. May also function as a neurotransmitter and/or neuromodulator. This is Pigment-dispersing hormone 2 peptides (PDH2) from Callinectes sapidus (Blue crab).